Consider the following 511-residue polypeptide: Cobyric acid synthase (511 aa).

Positions leucine 251–phenylalanine 443 constitute a GATase cobBQ-type domain. Residue cysteine 332 is the Nucleophile of the active site. Residue histidine 435 is part of the active site.

It belongs to the CobB/CobQ family. CobQ subfamily.

It functions in the pathway cofactor biosynthesis; adenosylcobalamin biosynthesis. In terms of biological role, catalyzes amidations at positions B, D, E, and G on adenosylcobyrinic A,C-diamide. NH(2) groups are provided by glutamine, and one molecule of ATP is hydrogenolyzed for each amidation. This Listeria monocytogenes serotype 4b (strain CLIP80459) protein is Cobyric acid synthase.